A 112-amino-acid polypeptide reads, in one-letter code: Nitrogen regulatory protein GlnK2 (112 aa).

ADP is bound by residues Thr29, 38–39 (QQ), Val64, and 87–90 (GDGK). ATP is bound by residues Thr29, 38–39 (QQ), Val64, 87–90 (GDGK), and 101–103 (RIR).

It belongs to the P(II) protein family. In terms of assembly, homotrimer. Interacts and forms a complex with Amt2.

It localises to the cytoplasm. With respect to regulation, binding of adenosine nucleotides results in distinct, cooperative behavior for ATP and ADP. GlnK2 is completely insensitive to 2-oxoglutarate at a low level of intracellular nitrogen. Functionally, involved in the regulation of nitrogen metabolism. Regulates the activity of its targets by protein-protein interaction in response to the nitrogen status of the cell. Regulates the activity of the ammonia channel Amt2 via direct interaction. The sequence is that of Nitrogen regulatory protein GlnK2 from Archaeoglobus fulgidus (strain ATCC 49558 / DSM 4304 / JCM 9628 / NBRC 100126 / VC-16).